An 872-amino-acid polypeptide reads, in one-letter code: Cellulose synthase catalytic subunit [UDP-forming] (872 aa).

The next 4 membrane-spanning stretches (helical) occupy residues 30–50 (SAFS…FIPL), 151–171 (ILGI…TQPF), 173–193 (PLAQ…VRRM), and 230–250 (LVCG…LVLG). Positions 271–364 (LWPSVDIFVP…FVSIFDCDHV (94 aa)) are catalytic subdomain A. Asp313 is an active-site residue. Residues Asp360 and Asp362 each contribute to the substrate site. The interval 441–501 (KPLDEIGGIA…GQRIRWARGM (61 aa)) is catalytic subdomain B. Asp457 is an active-site residue. Transmembrane regions (helical) follow at residues 525-545 (VNAM…TAPL), 547-567 (FLLL…LFVL), 592-612 (IYET…LINP), 640-660 (IFLV…YFYG), and 668-688 (VVVS…AVAV). One can recognise a PilZ domain in the interval 694-790 (QVRRSHRVEM…QHIDFVQCTF (97 aa)). A helical membrane pass occupies residues 833–853 (SVKGIFRVLTSLVSWVVSFIP).

Belongs to the glycosyltransferase 2 family. Mg(2+) is required as a cofactor.

It is found in the cell inner membrane. The catalysed reaction is [(1-&gt;4)-beta-D-glucosyl](n) + UDP-alpha-D-glucose = [(1-&gt;4)-beta-D-glucosyl](n+1) + UDP + H(+). It functions in the pathway glycan metabolism; bacterial cellulose biosynthesis. Activated by bis-(3'-5') cyclic diguanylic acid (c-di-GMP). Catalytic subunit of cellulose synthase. It polymerizes uridine 5'-diphosphate glucose to cellulose, which is produced as an extracellular component for mechanical and chemical protection at the onset of the stationary phase, when the cells exhibit multicellular behavior (rdar morphotype). Coexpression of cellulose and thin aggregative fimbriae leads to a hydrophobic network with tightly packed cells embedded in a highly inert matrix. This is Cellulose synthase catalytic subunit [UDP-forming] (bcsA) from Escherichia coli O157:H7.